An 823-amino-acid polypeptide reads, in one-letter code: Hypoxia-inducible factor 1-alpha (823 aa).

A disordered region spans residues 1–30 (MEGAGGANDKKKISSERRKEKSRDAARSRR). Positions 1-401 (MEGAGGANDK…KEPDALTLLA (401 aa)) are interaction with TSGA10. Over residues 8–30 (NDKKKISSERRKEKSRDAARSRR) the composition is skewed to basic and acidic residues. The bHLH domain maps to 17–70 (RRKEKSRDAARSRRSKESEVFYELAHQLPLPHNVSSHLDKASVMRLTISYLRVR). Residues 21–30 (KSRDAARSRR) are DNA-binding. The 74-residue stretch at 85–158 (KAQMNCFYLK…THRNGLVKKG (74 aa)) folds into the PAS 1 domain. Positions 170 to 191 (RMKCTLTSRGRTMNIKSATWKV) are required for heterodimer formation with ARNT. Positions 228–298 (PHPSNIEIPL…KTHHDMFTKG (71 aa)) constitute a PAS 2 domain. At S247 the chain carries Phosphoserine; by CK1. The PAC domain occupies 302-345 (TGQYRMLAKRGGYVWIETQATVIYNTKNSQPQCIVCVNYVVSGI). Positions 401 to 600 (APAAGDTIIS…QSASTNTVFQ (200 aa)) are ODD. P402 is modified (4-hydroxyproline). A compositionally biased stretch (polar residues) spans 494 to 517 (IQDQPASPSDGSTRQSSPEPNSPS). The segment at 494–521 (IQDQPASPSDGSTRQSSPEPNSPSEYCF) is disordered. Positions 531–575 (FKLELVEKLFAEDTEAKNPFSTQDTDLDLEMLAPYIPMDDDFQLR) are NTAD. Position 532 is an N6-acetyllysine; alternate (K532). A Glycyl lysine isopeptide (Lys-Gly) (interchain with G-Cter in ubiquitin); alternate cross-link involves residue K532. Residues K538 and K547 each participate in a glycyl lysine isopeptide (Lys-Gly) (interchain with G-Cter in ubiquitin) cross-link. S551 carries the phosphoserine; by GSK3-beta modification. The residue at position 555 (T555) is a Phosphothreonine; by GSK3-beta. P564 bears the 4-hydroxyproline mark. At S576 the chain carries Phosphoserine; by PLK3. The segment at 576–782 (SFDQLSPLEN…SDLACRLLGQ (207 aa)) is ID. Disordered regions lie at residues 581-602 (SPLE…FQPT) and 639-685 (PSPP…PRSP). S589 carries the phosphoserine; by GSK3-beta modification. The segment covering 651–666 (ATTSPYSDTGSRTASP) has biased composition (polar residues). The residue at position 654 (S654) is a Phosphoserine; by PLK3. Residue K706 is modified to N6-acetyllysine. Residues 715–721 (RKRKIEH) carry the Nuclear localization signal motif. The interval 783 to 823 (SMDESGLPQLTSYDCEVNAPIQGSRNLLQGEELLRALDQVN) is CTAD. Residue C797 is modified to S-nitrosocysteine. N800 bears the (3S)-3-hydroxyasparagine mark.

In terms of assembly, interacts with the ARNT; forms a heterodimer that binds core DNA sequence 5'-TACGTG-3' within the hypoxia response element (HRE) of target gene promoters. Interacts with COPS5; the interaction increases the transcriptional activity of HIF1A through increased stability. Interacts with EP300 (via TAZ-type 1 domains); the interaction is stimulated in response to hypoxia and inhibited by CITED2. Interacts with CREBBP (via TAZ-type 1 domains). Interacts with NCOA1, NCOA2, APEX1 and HSP90. Interacts (hydroxylated within the ODD domain) with VHLL (via beta domain); the interaction, leads to polyubiquitination and subsequent HIF1A proteasomal degradation. During hypoxia, sumoylated HIF1A also binds VHL; the interaction promotes the ubiquitination of HIF1A. Interacts with SENP1; the interaction desumoylates HIF1A resulting in stabilization and activation of transcription. Interacts (via the ODD domain) with NAA10; the interaction appears not to acetylate HIF1A nor have any affect on protein stability, during hypoxia. Interacts with RWDD3; the interaction enhances HIF1A sumoylation. Interacts with TSGA10. Interacts with HIF3A. Interacts with RORA (via the DNA binding domain); the interaction enhances HIF1A transcription under hypoxia through increasing protein stability. Interaction with PSMA7 inhibits the transactivation activity of HIF1A under both normoxic and hypoxia-mimicking conditions. Interacts with USP20. Interacts with RACK1; promotes HIF1A ubiquitination and proteasome-mediated degradation. Interacts (via N-terminus) with USP19. Interacts with SIRT2. Interacts (deacetylated form) with EGLN1. Interacts with CBFA2T3. Interacts with HSP90AA1 and HSP90AB1. Interacts with DCUN1D1; this interaction increases the interaction between VHL and DCUN1D1. Interacts with HIF1AN. Post-translationally, S-nitrosylation of Cys-797 may be responsible for increased recruitment of p300 coactivator necessary for transcriptional activity of HIF-1 complex. Acetylation of Lys-532 by ARD1 increases interaction with VHL and stimulates subsequent proteasomal degradation. Deacetylation of Lys-706 by SIRT2 increases its interaction with and hydroxylation by EGLN1 thereby inactivating HIF1A activity by inducing its proteasomal degradation. In terms of processing, ubiquitinated; in normoxia, following hydroxylation and interaction with VHL. Lys-532 appears to be the principal site of ubiquitination. Clioquinol, the Cu/Zn-chelator, inhibits ubiquitination through preventing hydroxylation at Asn-800. Ubiquitinated by E3 ligase VHL. Deubiquitinated by UCHL1. Post-translationally, requires phosphorylation for DNA-binding. Phosphorylation at Ser-247 by CSNK1D/CK1 represses kinase activity and impairs ARNT binding. Phosphorylation by GSK3-beta and PLK3 promote degradation by the proteasome. The iron and 2-oxoglutarate dependent 3-hydroxylation of asparagine is (S) stereospecific within HIF CTAD domains. In terms of processing, sumoylated; with SUMO1 under hypoxia. Sumoylation is enhanced through interaction with RWDD3. Both sumoylation and desumoylation seem to be involved in the regulation of its stability during hypoxia. Sumoylation can promote either its stabilization or its VHL-dependent degradation by promoting hydroxyproline-independent HIF1A-VHL complex binding, thus leading to HIF1A ubiquitination and proteasomal degradation. Desumoylation by SENP1 increases its stability amd transcriptional activity. There is a disaccord between various publications on the effect of sumoylation and desumoylation on its stability and transcriptional activity. Post-translationally, in normoxia, is hydroxylated on Pro-402 and Pro-564 in the oxygen-dependent degradation domain (ODD) by EGLN1/PHD2 and EGLN2/PHD1. EGLN3/PHD3 has also been shown to hydroxylate Pro-564. The hydroxylated prolines promote interaction with VHL, initiating rapid ubiquitination and subsequent proteasomal degradation. Deubiquitinated by USP20. Under hypoxia, proline hydroxylation is impaired and ubiquitination is attenuated, resulting in stabilization. In normoxia, is hydroxylated on Asn-800 by HIF1AN, thus abrogating interaction with CREBBP and EP300 and preventing transcriptional activation. Repressed by iron ion, via Fe(2+) prolyl hydroxylase (PHD) enzymes-mediated hydroxylation and subsequent proteasomal degradation.

Its subcellular location is the cytoplasm. It is found in the nucleus. Its activity is regulated as follows. Induced by reactive oxygen species (ROS). Its function is as follows. Functions as a master transcriptional regulator of the adaptive response to hypoxia. Under hypoxic conditions, activates the transcription of over 40 genes, including erythropoietin, glucose transporters, glycolytic enzymes, vascular endothelial growth factor, HILPDA, and other genes whose protein products increase oxygen delivery or facilitate metabolic adaptation to hypoxia. Plays an essential role in embryonic vascularization, tumor angiogenesis and pathophysiology of ischemic disease. Heterodimerizes with ARNT; heterodimer binds to core DNA sequence 5'-TACGTG-3' within the hypoxia response element (HRE) of target gene promoters. Activation requires recruitment of transcriptional coactivators such as CREBBP and EP300. Activity is enhanced by interaction with NCOA1 and/or NCOA2. Interaction with redox regulatory protein APEX1 seems to activate CTAD and potentiates activation by NCOA1 and CREBBP. Involved in the axonal distribution and transport of mitochondria in neurons during hypoxia. The sequence is that of Hypoxia-inducible factor 1-alpha (HIF1A) from Bos taurus (Bovine).